The sequence spans 515 residues: Gamma aminobutyrate transaminase 1, mitochondrial (515 aa).

Residues 1–57 (MAKISRLFGSTVKAAITAQAGFHGKRIPAVSSLQEHIVKSTPARYNSTQACLENDIS) constitute a mitochondrion transit peptide. Residue 172-173 (GS) participates in pyridoxal 5'-phosphate binding. A substrate-binding site is contributed by Y205. D312 is a pyridoxal 5'-phosphate binding site. K341 provides a ligand contact to substrate. K341 carries the N6-(pyridoxal phosphate)lysine modification.

The protein belongs to the class-III pyridoxal-phosphate-dependent aminotransferase family. In terms of tissue distribution, expressed in leaves, roots, stems, flowers and fruits.

The protein resides in the mitochondrion. It carries out the reaction 4-aminobutanoate + pyruvate = succinate semialdehyde + L-alanine. The catalysed reaction is 4-aminobutanoate + glyoxylate = succinate semialdehyde + glycine. In terms of biological role, transaminase that degrades gamma-amino butyric acid (GABA) and uses pyruvate or glyoxylate as amino-group acceptor. Cannot use beta-alanine, ornithine, acetylornithine, serine, glycine, asparagine, glutamine, glutamate, valine, leucine, isoleucine, methionine, phenylalanine, histidine, lysine, arginine, aspartate, threonine, tyrosine, tryptophan, proline, or cysteine as amino donors. Acts predominantly in vegetative tissues. The polypeptide is Gamma aminobutyrate transaminase 1, mitochondrial (GABA-TP1) (Solanum lycopersicum (Tomato)).